A 217-amino-acid chain; its full sequence is ATP phosphoribosyltransferase (217 aa).

The protein belongs to the ATP phosphoribosyltransferase family. Short subfamily. In terms of assembly, heteromultimer composed of HisG and HisZ subunits.

The protein localises to the cytoplasm. The enzyme catalyses 1-(5-phospho-beta-D-ribosyl)-ATP + diphosphate = 5-phospho-alpha-D-ribose 1-diphosphate + ATP. Its pathway is amino-acid biosynthesis; L-histidine biosynthesis; L-histidine from 5-phospho-alpha-D-ribose 1-diphosphate: step 1/9. Functionally, catalyzes the condensation of ATP and 5-phosphoribose 1-diphosphate to form N'-(5'-phosphoribosyl)-ATP (PR-ATP). Has a crucial role in the pathway because the rate of histidine biosynthesis seems to be controlled primarily by regulation of HisG enzymatic activity. This chain is ATP phosphoribosyltransferase, found in Burkholderia ambifaria (strain MC40-6).